The chain runs to 244 residues: tRNA (guanine-N(7)-)-methyltransferase (244 aa).

Over residues 1–10 the composition is skewed to polar residues; the sequence is MSDTPQSPAQ. Residues 1-20 are disordered; the sequence is MSDTPQSPAQDSLAEHDEAR. The S-adenosyl-L-methionine site is built by Glu74, Glu99, Asp126, and Asp149. Asp149 is a catalytic residue. Substrate-binding positions include Lys153, Asp185, and 222–225; that span reads TKFE.

It belongs to the class I-like SAM-binding methyltransferase superfamily. TrmB family.

It carries out the reaction guanosine(46) in tRNA + S-adenosyl-L-methionine = N(7)-methylguanosine(46) in tRNA + S-adenosyl-L-homocysteine. It participates in tRNA modification; N(7)-methylguanine-tRNA biosynthesis. Catalyzes the formation of N(7)-methylguanine at position 46 (m7G46) in tRNA. The chain is tRNA (guanine-N(7)-)-methyltransferase from Pseudomonas aeruginosa (strain ATCC 15692 / DSM 22644 / CIP 104116 / JCM 14847 / LMG 12228 / 1C / PRS 101 / PAO1).